A 335-amino-acid chain; its full sequence is UPF0353 protein MAP_3435c (335 aa).

A run of 2 helical transmembrane segments spans residues 18-38 (WFFL…VQQF) and 67-87 (VPTI…AGPT). Positions 98–294 (VVMLVIDVSE…DSLKNVYSTL (197 aa)) constitute a VWFA domain. The chain crosses the membrane as a helical span at residues 309-329 (MAWMLLGAVVLAGAVLAGLLL).

Belongs to the UPF0353 family.

Its subcellular location is the cell membrane. This chain is UPF0353 protein MAP_3435c, found in Mycolicibacterium paratuberculosis (strain ATCC BAA-968 / K-10) (Mycobacterium paratuberculosis).